Reading from the N-terminus, the 269-residue chain is Thiazole synthase (269 aa).

Residue K109 is the Schiff-base intermediate with DXP of the active site. 1-deoxy-D-xylulose 5-phosphate-binding positions include G170, 196–197 (AG), and 218–219 (NT).

It belongs to the ThiG family. As to quaternary structure, homotetramer. Forms heterodimers with either ThiH or ThiS.

Its subcellular location is the plastid. It is found in the chloroplast. The enzyme catalyses [ThiS sulfur-carrier protein]-C-terminal-Gly-aminoethanethioate + 2-iminoacetate + 1-deoxy-D-xylulose 5-phosphate = [ThiS sulfur-carrier protein]-C-terminal Gly-Gly + 2-[(2R,5Z)-2-carboxy-4-methylthiazol-5(2H)-ylidene]ethyl phosphate + 2 H2O + H(+). The protein operates within cofactor biosynthesis; thiamine diphosphate biosynthesis. In terms of biological role, catalyzes the rearrangement of 1-deoxy-D-xylulose 5-phosphate (DXP) to produce the thiazole phosphate moiety of thiamine. Sulfur is provided by the thiocarboxylate moiety of the carrier protein ThiS. In vitro, sulfur can be provided by H(2)S. This Thalassiosira pseudonana (Marine diatom) protein is Thiazole synthase.